A 177-amino-acid polypeptide reads, in one-letter code: Large ribosomal subunit protein uL5 (177 aa).

Belongs to the universal ribosomal protein uL5 family. Part of the 50S ribosomal subunit; part of the 5S rRNA/L5/L18/L25 subcomplex. Contacts the 5S rRNA and the P site tRNA. Forms a bridge to the 30S subunit in the 70S ribosome.

In terms of biological role, this is one of the proteins that bind and probably mediate the attachment of the 5S RNA into the large ribosomal subunit, where it forms part of the central protuberance. In the 70S ribosome it contacts protein S13 of the 30S subunit (bridge B1b), connecting the 2 subunits; this bridge is implicated in subunit movement. Contacts the P site tRNA; the 5S rRNA and some of its associated proteins might help stabilize positioning of ribosome-bound tRNAs. This is Large ribosomal subunit protein uL5 from Anaplasma phagocytophilum (strain HZ).